We begin with the raw amino-acid sequence, 982 residues long: Ubiquitin carboxyl-terminal hydrolase 15 (982 aa).

Positions 7 to 118 (VDLETQRSEV…SQQPIARKVV (112 aa)) constitute a DUSP domain. Residues 288–933 (CGLSNLGNTC…AAYVLFYQRQ (646 aa)) enclose the USP domain. Cys297 serves as the catalytic Nucleophile. A disordered region spans residues 623–695 (TEENDGSLHC…DNDSENGLCT (73 aa)). A compositionally biased stretch (acidic residues) spans 655–672 (METDEPDDESSQDQELPS). His891 functions as the Proton acceptor in the catalytic mechanism. The segment at 950-982 (QGASAATGAPHESDEESNEDENDIENENCMHTN) is disordered. Positions 962–975 (SDEESNEDENDIEN) are enriched in acidic residues.

Belongs to the peptidase C19 family.

Its subcellular location is the cytoplasm. The protein resides in the nucleus. The catalysed reaction is Thiol-dependent hydrolysis of ester, thioester, amide, peptide and isopeptide bonds formed by the C-terminal Gly of ubiquitin (a 76-residue protein attached to proteins as an intracellular targeting signal).. Functionally, hydrolase that removes conjugated ubiquitin from target proteins and regulates various pathways such as the TGF-beta receptor signaling and NF-kappa-B pathways. Acts as a key regulator of TGF-beta receptor signaling pathway, but the precise mechanism is still unclear: according to a report, acts by promoting deubiquitination of monoubiquitinated R-SMADs, thereby alleviating inhibition of R-SMADs and promoting activation of TGF-beta target genes. According to another reports, regulates the TGF-beta receptor signaling pathway by mediating deubiquitination and stabilization of tgfbr1, leading to an enhanced TGF-beta signal. May also regulate gene expression and/or DNA repair through the deubiquitination of histone H2B. Involved in endosome organization by mediating deubiquitination of rnf26 target(s), releasing vesicles that are restrained in the perinuclear region. This is Ubiquitin carboxyl-terminal hydrolase 15 (usp15) from Xenopus tropicalis (Western clawed frog).